The chain runs to 228 residues: Ribosomal RNA large subunit methyltransferase E (228 aa).

The S-adenosyl-L-methionine site is built by G76, W78, D99, D115, and D139. The active-site Proton acceptor is K179.

The protein belongs to the class I-like SAM-binding methyltransferase superfamily. RNA methyltransferase RlmE family.

The protein localises to the cytoplasm. It carries out the reaction uridine(2552) in 23S rRNA + S-adenosyl-L-methionine = 2'-O-methyluridine(2552) in 23S rRNA + S-adenosyl-L-homocysteine + H(+). Functionally, specifically methylates the uridine in position 2552 of 23S rRNA at the 2'-O position of the ribose in the fully assembled 50S ribosomal subunit. The polypeptide is Ribosomal RNA large subunit methyltransferase E (Nitrobacter hamburgensis (strain DSM 10229 / NCIMB 13809 / X14)).